A 506-amino-acid polypeptide reads, in one-letter code: 2-isopropylmalate synthase (506 aa).

The region spanning 4–266 (ILFMDTTLRD…EPSMTLKEIK (263 aa)) is the Pyruvate carboxyltransferase domain. Positions 13, 201, 203, and 237 each coordinate Mn(2+). Residues 390–506 (NITQLQVHFV…KLKSFIQLVK (117 aa)) are regulatory domain.

The protein belongs to the alpha-IPM synthase/homocitrate synthase family. LeuA type 1 subfamily. Homodimer. It depends on Mn(2+) as a cofactor.

It localises to the cytoplasm. The enzyme catalyses 3-methyl-2-oxobutanoate + acetyl-CoA + H2O = (2S)-2-isopropylmalate + CoA + H(+). It functions in the pathway amino-acid biosynthesis; L-leucine biosynthesis; L-leucine from 3-methyl-2-oxobutanoate: step 1/4. In terms of biological role, catalyzes the condensation of the acetyl group of acetyl-CoA with 3-methyl-2-oxobutanoate (2-ketoisovalerate) to form 3-carboxy-3-hydroxy-4-methylpentanoate (2-isopropylmalate). In Bacillus cereus (strain ZK / E33L), this protein is 2-isopropylmalate synthase.